The chain runs to 190 residues: Small ribosomal subunit protein eS7x (190 aa).

Met-1 carries the N-acetylmethionine modification. A coiled-coil region spans residues 17–50 (TECEEQVAQALFDLENTNQELKSELKDLYINQAV).

The protein belongs to the eukaryotic ribosomal protein eS7 family.

The polypeptide is Small ribosomal subunit protein eS7x (RPS7C) (Arabidopsis thaliana (Mouse-ear cress)).